Here is a 122-residue protein sequence, read N- to C-terminus: Fluoride-specific ion channel FluC 2 (122 aa).

4 consecutive transmembrane segments (helical) span residues 1–21 (MAWL…FLLS), 33–53 (PLGT…LLAL), 62–82 (VTLA…TFTY), and 102–122 (GSIL…GSLF). The Na(+) site is built by G72 and T75.

This sequence belongs to the fluoride channel Fluc/FEX (TC 1.A.43) family.

Its subcellular location is the cell membrane. The catalysed reaction is fluoride(in) = fluoride(out). Na(+) is not transported, but it plays an essential structural role and its presence is essential for fluoride channel function. Fluoride-specific ion channel. Important for reducing fluoride concentration in the cell, thus reducing its toxicity. The chain is Fluoride-specific ion channel FluC 2 from Moorella thermoacetica (strain ATCC 39073 / JCM 9320).